The following is a 323-amino-acid chain: Voltage-dependent calcium channel gamma-2 subunit (323 aa).

A helical transmembrane segment spans residues Met-10 to Thr-30. Asn-48 is a glycosylation site (N-linked (GlcNAc...) asparagine). The next 3 membrane-spanning stretches (helical) occupy residues Ser-104–Ala-124, Ile-134–Ile-154, and Phe-182–Ile-202. The segment at Tyr-233–Asn-261 is disordered. Position 253 is a phosphoserine (Ser-253). At Tyr-271 the chain carries Phosphotyrosine. Phosphothreonine; by PKA is present on Thr-321.

The protein belongs to the PMP-22/EMP/MP20 family. CACNG subfamily. The L-type calcium channel is composed of five subunits: alpha-1, alpha-2/delta, beta and gamma. Interacts with the PDZ domains of DLG4/PSD-95 and DLG1/SAP97. May interact with GOPC. Acts as an auxiliary subunit for AMPA-selective glutamate receptors (AMPARs). Found in a complex with GRIA1, GRIA2, GRIA3, GRIA4, CNIH2, CNIH3, CACNG3, CACNG4, CACNG5, CACNG7 and CACNG8. Interacts with GRIA1 and GRIA2. Interacts with MPP2. In terms of processing, phosphorylation of Thr-321 by PKA impairs interaction with DLG1 and DLG4. Brain.

Its subcellular location is the membrane. It localises to the synapse. It is found in the synaptosome. In terms of biological role, regulates the trafficking and gating properties of AMPA-selective glutamate receptors (AMPARs). Promotes their targeting to the cell membrane and synapses and modulates their gating properties by slowing their rates of activation, deactivation and desensitization. Does not show subunit-specific AMPA receptor regulation and regulates all AMPAR subunits. Thought to stabilize the calcium channel in an inactivated (closed) state. The chain is Voltage-dependent calcium channel gamma-2 subunit (Cacng2) from Mus musculus (Mouse).